The following is a 91-amino-acid chain: Small ribosomal subunit protein uS19 (91 aa).

Belongs to the universal ribosomal protein uS19 family.

In terms of biological role, protein S19 forms a complex with S13 that binds strongly to the 16S ribosomal RNA. The chain is Small ribosomal subunit protein uS19 from Trichodesmium erythraeum (strain IMS101).